Here is a 459-residue protein sequence, read N- to C-terminus: Bifunctional protein GlmU (459 aa).

Positions 1–230 (MSNRFAVILA…FDETLGVNDR (230 aa)) are pyrophosphorylase. UDP-N-acetyl-alpha-D-glucosamine contacts are provided by residues 9-12 (LAAG), K23, Q73, and 78-79 (GT). A Mg(2+)-binding site is contributed by D103. Residues G140, E155, N170, and N228 each contribute to the UDP-N-acetyl-alpha-D-glucosamine site. Residue N228 coordinates Mg(2+). Positions 231-251 (VALSQAEIIMKNRINRKNMVN) are linker. The interval 252–459 (GVTIIDPSNT…VDQLLNKKKS (208 aa)) is N-acetyltransferase. R333 and K351 together coordinate UDP-N-acetyl-alpha-D-glucosamine. Residue H363 is the Proton acceptor of the active site. Positions 366 and 377 each coordinate UDP-N-acetyl-alpha-D-glucosamine. Acetyl-CoA contacts are provided by residues 386–387 (NY), A423, and R440.

The protein in the N-terminal section; belongs to the N-acetylglucosamine-1-phosphate uridyltransferase family. It in the C-terminal section; belongs to the transferase hexapeptide repeat family. Homotrimer. The cofactor is Mg(2+).

It is found in the cytoplasm. The catalysed reaction is alpha-D-glucosamine 1-phosphate + acetyl-CoA = N-acetyl-alpha-D-glucosamine 1-phosphate + CoA + H(+). It carries out the reaction N-acetyl-alpha-D-glucosamine 1-phosphate + UTP + H(+) = UDP-N-acetyl-alpha-D-glucosamine + diphosphate. It participates in nucleotide-sugar biosynthesis; UDP-N-acetyl-alpha-D-glucosamine biosynthesis; N-acetyl-alpha-D-glucosamine 1-phosphate from alpha-D-glucosamine 6-phosphate (route II): step 2/2. The protein operates within nucleotide-sugar biosynthesis; UDP-N-acetyl-alpha-D-glucosamine biosynthesis; UDP-N-acetyl-alpha-D-glucosamine from N-acetyl-alpha-D-glucosamine 1-phosphate: step 1/1. Its pathway is bacterial outer membrane biogenesis; LPS lipid A biosynthesis. Catalyzes the last two sequential reactions in the de novo biosynthetic pathway for UDP-N-acetylglucosamine (UDP-GlcNAc). The C-terminal domain catalyzes the transfer of acetyl group from acetyl coenzyme A to glucosamine-1-phosphate (GlcN-1-P) to produce N-acetylglucosamine-1-phosphate (GlcNAc-1-P), which is converted into UDP-GlcNAc by the transfer of uridine 5-monophosphate (from uridine 5-triphosphate), a reaction catalyzed by the N-terminal domain. This Bacillus cereus (strain ZK / E33L) protein is Bifunctional protein GlmU.